Reading from the N-terminus, the 370-residue chain is Putative transposase InsL for insertion sequence element IS186A (370 aa).

This sequence belongs to the transposase 11 family.

Its function is as follows. Involved in the transposition of the insertion sequence IS186. The protein is Putative transposase InsL for insertion sequence element IS186A (insL1) of Escherichia coli (strain K12).